The following is a 610-amino-acid chain: Elongation factor 4 (610 aa).

The 183-residue stretch at 11-193 (EKIRNFSIIA…QIVEKVPAPT (183 aa)) folds into the tr-type G domain. Residues 23-28 (DHGKST) and 140-143 (NKID) each bind GTP.

This sequence belongs to the TRAFAC class translation factor GTPase superfamily. Classic translation factor GTPase family. LepA subfamily.

It localises to the cell membrane. It catalyses the reaction GTP + H2O = GDP + phosphate + H(+). Its function is as follows. Required for accurate and efficient protein synthesis under certain stress conditions. May act as a fidelity factor of the translation reaction, by catalyzing a one-codon backward translocation of tRNAs on improperly translocated ribosomes. Back-translocation proceeds from a post-translocation (POST) complex to a pre-translocation (PRE) complex, thus giving elongation factor G a second chance to translocate the tRNAs correctly. Binds to ribosomes in a GTP-dependent manner. This is Elongation factor 4 from Streptococcus agalactiae serotype Ia (strain ATCC 27591 / A909 / CDC SS700).